The following is a 158-amino-acid chain: Large ribosomal subunit protein uL16 (158 aa).

The protein belongs to the universal ribosomal protein uL16 family. In terms of assembly, part of the 50S ribosomal subunit.

In terms of biological role, binds 23S rRNA and is also seen to make contacts with the A and possibly P site tRNAs. This Parasynechococcus marenigrum (strain WH8102) protein is Large ribosomal subunit protein uL16.